A 559-amino-acid polypeptide reads, in one-letter code: Fanconi-associated nuclease 1 homolog (559 aa).

4 residues coordinate Mn(2+): Glu-386, Asp-507, Glu-522, and Val-523. In terms of domain architecture, VRR-NUC spans 443-555; that stretch reads DGSYRDAIRC…MPVAVCYVRW (113 aa).

Belongs to the FAN1 family. Mn(2+) serves as cofactor. It depends on Mg(2+) as a cofactor.

The catalysed reaction is Hydrolytically removes 5'-nucleotides successively from the 3'-hydroxy termini of 3'-hydroxy-terminated oligonucleotides.. Nuclease required for the repair of DNA interstrand cross-links (ICL). Acts as a 5'-3' exonuclease that anchors at a cut end of DNA and cleaves DNA successively at every third nucleotide, allowing to excise an ICL from one strand through flanking incisions. Also has endonuclease activity toward 5'-flaps. This Pseudomonas aeruginosa (strain ATCC 15692 / DSM 22644 / CIP 104116 / JCM 14847 / LMG 12228 / 1C / PRS 101 / PAO1) protein is Fanconi-associated nuclease 1 homolog.